Reading from the N-terminus, the 923-residue chain is Protein prickle (923 aa).

A disordered region spans residues 1-196 (MSYPYQKSHH…HPFHSPASAA (196 aa)). The span at 11 to 34 (QTQQPQQNGHPQHQLMLQQQQQAD) shows a compositional bias: low complexity. A compositionally biased stretch (basic residues) spans 37-49 (PHHHHHHHVHHAT). Low complexity-rich tracts occupy residues 59 to 73 (RSPL…LYSG) and 106 to 118 (MPGM…PPGM). Gly residues predominate over residues 122–134 (LGGGGGGGGGGSA). Low complexity-rich tracts occupy residues 152–169 (STVT…SARS) and 184–196 (SSHH…ASAA). In terms of domain architecture, PET spans 275-383 (GGGHNYSQSD…TVKQITTTLI (109 aa)). 3 LIM zinc-binding domains span residues 382 to 446 (LICE…ETLK), 447 to 507 (PRCS…MFAE), and 508 to 570 (YCDY…GEPP). Disordered stretches follow at residues 571-668 (TPSD…LDLT) and 703-867 (GPIA…SSAD). Gly residues predominate over residues 709–718 (NGNGPTGGGP). Residues 738–748 (ESPSFSGTNSP) show a composition bias toward polar residues. Positions 777 to 786 (HSIKEVRFEG) are enriched in basic and acidic residues. The span at 792–805 (LPRTKSYCQRNGGQ) shows a compositional bias: polar residues. Positions 817–827 (SDDDELAEDET) are enriched in acidic residues. Basic and acidic residues predominate over residues 840 to 852 (QREQQRPVDDSDA). A compositionally biased stretch (low complexity) spans 853 to 865 (RSVCSTCSSSSSS).

This sequence belongs to the prickle / espinas / testin family. As to quaternary structure, interacts with dsh; PET and LIM domains interact with dsh DEP domain, in wing cells. Interacts with Vang in photoreceptor cells.

The protein resides in the cell membrane. Its function is as follows. Acts in a planar cell polarity (PCP) complex; polarization along the apical/basal axis of epithelial cells. PCP signaling in the wing disk requires the receptor fz and the cytoplasmic proteins dsh and pk. These act in a feedback loop leading to activation of the jnk cascade and subsequent polarized arrangement of hairs and bristles. Dgo and pk compete with one another for dsh binding, thereby modulating fz dsh activity and ensuring tight control over fz PCP signaling. Vang, stan and pk function together to regulate the establishment of tissue polarity in the adult eye. The chain is Protein prickle from Anopheles gambiae (African malaria mosquito).